Here is an 818-residue protein sequence, read N- to C-terminus: Nibrin (818 aa).

Positions 22–70 constitute an FHA domain; the sequence is YVVGRKNCEILLTNDQSISRVHAVLTVTEQAVTLKDSSKYGTFVNGEKL. BRCT domains are found at residues 91 to 168 and 211 to 301; these read SKFS…SALS and GKTF…LAAI. 3 disordered regions span residues 372–716, 729–757, and 793–818; these read AVGE…DLPR, NNSS…KKNV, and EEKL…AKKR. Residues 379 to 405 are compositionally biased toward polar residues; that stretch reads KTNPTQKASTTNKPLSLGQEPSSTRIV. Low complexity predominate over residues 409–419; that stretch reads VMSSESFSVVE. Over residues 444-469 the composition is skewed to polar residues; it reads APSSGNTTLKHSPQKQTALTSFFQPS. Positions 470–475 match the Nuclear localization signal motif; that stretch reads SKKRPR. Residues 515–530 show a composition bias toward polar residues; it reads EETSLGQACGTGQNSS. Residues 549–571 are compositionally biased toward acidic residues; that stretch reads TAADDLEMSLEELEFLMSDEMDE. The span at 586 to 602 shows a compositional bias: polar residues; sequence GLTSKINSEQLSNQQEV. Residues 603-612 show a composition bias toward basic and acidic residues; it reads TESKGRKGEK. Low complexity predominate over residues 613–625; that stretch reads NQQSSSSNIQSMQ. Composition is skewed to polar residues over residues 633-644 and 653-662; these read VTNQDTQTQSKR and SSANKGPSKN. A compositionally biased stretch (basic and acidic residues) spans 663–675; sequence KTPELEEVKKEEV. Polar residues-rich tracts occupy residues 678-692 and 699-708; these read VVNS…QTSE and MQASTSNSGP. Positions 793-808 are enriched in basic and acidic residues; that stretch reads EEKLNEREETLGDDLF. The short motif at 804–813 is the FxF/Y motif element; sequence GDDLFRYNPR.

Belongs to the Nibrin family. As to quaternary structure, component of the MRN complex composed of two heterodimers rad50 and mre11 associated with a single nbn.

It localises to the nucleus. The protein localises to the chromosome. Its subcellular location is the PML body. It is found in the telomere. Component of the MRN complex, which plays a central role in double-strand break (DSB) repair, DNA recombination, maintenance of telomere integrity and meiosis. The MRN complex is involved in the repair of DNA double-strand breaks (DSBs) via homologous recombination (HR), an error-free mechanism which primarily occurs during S and G2 phases. The complex (1) mediates the end resection of damaged DNA, which generates proper single-stranded DNA, a key initial steps in HR, and is (2) required for the recruitment of other repair factors and efficient activation of ATM and ATR upon DNA damage. The MRN complex possesses single-strand endonuclease activity and double-strand-specific 3'-5' exonuclease activity, which are provided by MRE11, to initiate end resection, which is required for single-strand invasion and recombination. Within the MRN complex, nbn acts as a protein-protein adapter, which specifically recognizes and binds phosphorylated proteins, promoting their recruitment to DNA damage sites. Recruits mre11 and rad50 components of the MRN complex to DSBs in response to DNA damage. Promotes the recruitment of PI3/PI4-kinase family members atm, atr, and probably DNA-PKcs to the DNA damage sites, activating their functions. Mediates the recruitment of phosphorylated rbbp8/CtIP to DSBs, leading to cooperation between the MRN complex and rbbp8/CtIP to initiate end resection. The MRN complex and rbbp8/CtIP are also required for chromosome alignment during metaphase. This chain is Nibrin (nbn), found in Danio rerio (Zebrafish).